A 401-amino-acid chain; its full sequence is Large ribosomal subunit protein uL3 (401 aa).

The tract at residues 1–22 (MSHRKFSAPRHGHMGFTPKKRS) is disordered.

This sequence belongs to the universal ribosomal protein uL3 family.

Its subcellular location is the cytoplasm. The L3 protein is a component of the large subunit of cytoplasmic ribosomes. The chain is Large ribosomal subunit protein uL3 (rpl-3) from Caenorhabditis elegans.